A 511-amino-acid polypeptide reads, in one-letter code: Chromosomal replication initiator protein DnaA (511 aa).

Positions 1–90 are domain I, interacts with DnaA modulators; that stretch reads MSVELWQQCV…KRSSAPRAAP (90 aa). The segment at 91–174 is domain II; the sequence is NAPLAAAASQ…QVEGALKHTS (84 aa). The interval 133–162 is disordered; sequence VAAHDEPSRDSFDPMAGASSQQAPARAEQR. Positions 135–144 are enriched in basic and acidic residues; it reads AHDEPSRDSF. Positions 175–391 are domain III, AAA+ region; sequence YLNRTFTFEN…GALKRVIAHS (217 aa). Residues glycine 219, glycine 221, lysine 222, and threonine 223 each contribute to the ATP site. The tract at residues 392–511 is domain IV, binds dsDNA; sequence HFMGRDITIE…YKNLLRTLTT (120 aa).

Belongs to the DnaA family. Oligomerizes as a right-handed, spiral filament on DNA at oriC.

It is found in the cytoplasm. Plays an essential role in the initiation and regulation of chromosomal replication. ATP-DnaA binds to the origin of replication (oriC) to initiate formation of the DNA replication initiation complex once per cell cycle. Binds the DnaA box (a 9 base pair repeat at the origin) and separates the double-stranded (ds)DNA. Forms a right-handed helical filament on oriC DNA; dsDNA binds to the exterior of the filament while single-stranded (ss)DNA is stabiized in the filament's interior. The ATP-DnaA-oriC complex binds and stabilizes one strand of the AT-rich DNA unwinding element (DUE), permitting loading of DNA polymerase. After initiation quickly degrades to an ADP-DnaA complex that is not apt for DNA replication. Binds acidic phospholipids. This is Chromosomal replication initiator protein DnaA from Pseudomonas savastanoi pv. phaseolicola (strain 1448A / Race 6) (Pseudomonas syringae pv. phaseolicola (strain 1448A / Race 6)).